A 223-amino-acid polypeptide reads, in one-letter code: 7-cyano-7-deazaguanine synthase (223 aa).

11-21 (ISGGMDSALAA) provides a ligand contact to ATP. Positions 189, 197, 200, and 203 each coordinate Zn(2+).

This sequence belongs to the QueC family. Requires Zn(2+) as cofactor.

It catalyses the reaction 7-carboxy-7-deazaguanine + NH4(+) + ATP = 7-cyano-7-deazaguanine + ADP + phosphate + H2O + H(+). It functions in the pathway purine metabolism; 7-cyano-7-deazaguanine biosynthesis. Catalyzes the ATP-dependent conversion of 7-carboxy-7-deazaguanine (CDG) to 7-cyano-7-deazaguanine (preQ(0)). In Campylobacter fetus subsp. fetus (strain 82-40), this protein is 7-cyano-7-deazaguanine synthase.